A 227-amino-acid chain; its full sequence is Ribose-5-phosphate isomerase A (227 aa).

Substrate is bound by residues 26–29 (TGST), 82–85 (DGAD), and 95–98 (KGGG). The active-site Proton acceptor is the glutamate 104. Lysine 122 lines the substrate pocket.

This sequence belongs to the ribose 5-phosphate isomerase family. As to quaternary structure, homodimer.

The catalysed reaction is aldehydo-D-ribose 5-phosphate = D-ribulose 5-phosphate. It participates in carbohydrate degradation; pentose phosphate pathway; D-ribose 5-phosphate from D-ribulose 5-phosphate (non-oxidative stage): step 1/1. In terms of biological role, catalyzes the reversible conversion of ribose-5-phosphate to ribulose 5-phosphate. The sequence is that of Ribose-5-phosphate isomerase A from Streptococcus equi subsp. zooepidemicus (strain MGCS10565).